The sequence spans 571 residues: Urease subunit alpha (571 aa).

Residues 133-571 (AGIDTHIHFI…VALNQRYFFS (439 aa)) form the Urease domain. Ni(2+) contacts are provided by His-138, His-140, and Lys-221. N6-carboxylysine is present on Lys-221. His-223 contacts substrate. 2 residues coordinate Ni(2+): His-250 and His-276. Catalysis depends on His-324, which acts as the Proton donor. Asp-364 provides a ligand contact to Ni(2+).

This sequence belongs to the metallo-dependent hydrolases superfamily. Urease alpha subunit family. In terms of assembly, heterotrimer of UreA (gamma), UreB (beta) and UreC (alpha) subunits. Three heterotrimers associate to form the active enzyme. Ni cation serves as cofactor. In terms of processing, carboxylation allows a single lysine to coordinate two nickel ions.

The protein resides in the cytoplasm. The enzyme catalyses urea + 2 H2O + H(+) = hydrogencarbonate + 2 NH4(+). The protein operates within nitrogen metabolism; urea degradation; CO(2) and NH(3) from urea (urease route): step 1/1. The chain is Urease subunit alpha from Photorhabdus laumondii subsp. laumondii (strain DSM 15139 / CIP 105565 / TT01) (Photorhabdus luminescens subsp. laumondii).